The primary structure comprises 127 residues: CST complex subunit TEN1 (127 aa).

Belongs to the TEN1 family. As to quaternary structure, component of the CST complex, composed of CTC1, TEN1 and STN1. Interacts with STN1. No interaction with POT1A, but competes with it for STN1 binding. As to expression, ubiquitous. High expression in meristematic tissues and in vasculature.

The protein localises to the nucleus. It localises to the chromosome. It is found in the telomere. In terms of biological role, required for the maintenance of meristems and stem cells through the reduction of DNA damage. Promotes telomere integrity by maintaining telomere length and proper architecture of the chromosome terminus. Negatively regulates telomerase repeat addition processivity. Hampers contacts between enzymatically active telomerase and CST complex. In Arabidopsis thaliana (Mouse-ear cress), this protein is CST complex subunit TEN1.